The primary structure comprises 406 residues: Solute carrier family 22 member 18 (406 aa).

10 consecutive transmembrane segments (helical) span residues G8 to F28, V43 to F63, A85 to F105, L140 to T160, A168 to A188, F226 to I246, A258 to G278, L295 to F315, L316 to T336, and G374 to W394.

It belongs to the major facilitator (TC 2.A.1) superfamily. Organic cation transporter (TC 2.A.1.19) family. In terms of assembly, interacts with RNF167. Expressed at high levels in fetal and adult kidney and liver, and extraembryonic membranes (yolk sac). Expressed at moderate levels in intestine, heart, lung and testis.

Its subcellular location is the apical cell membrane. Its function is as follows. May act as a transporter of organic cations based on a proton efflux antiport mechanism. May play a role in the transport of chloroquine and quinidine-related compounds in kidney. Plays a role in the regulation of lipid metabolism. This is Solute carrier family 22 member 18 (Slc67a1) from Mus musculus (Mouse).